We begin with the raw amino-acid sequence, 199 residues long: MRSFVLRARAAPTESKLILEGVGQDAHTEILAHTLMNTIFVAQSHRENVTVHLVLESTKDFSRTITFDSNEITNIGGFHESALLSAVVRAVDASQGMIKEQTRQVEPGITVRTMSFEKLVKELAEDHQLYMMDKKGDFIRDAEIAENPCFLLTDHIPMPKKSYNSLKRLGTEKISLGPNMLFASQCVVLINNELDVRGF.

S-adenosyl-L-methionine-binding residues include Met-132 and Cys-186.

Belongs to the methyltransferase superfamily. TrmY family.

The protein localises to the cytoplasm. The sequence is that of Putative pseudouridine methyltransferase from Vibrio atlanticus (strain LGP32) (Vibrio splendidus (strain Mel32)).